A 262-amino-acid polypeptide reads, in one-letter code: MTKQFAVIGNPIEQSRSPELHHAFAEKTGVDLNYQKRLAPLDGFESSMRSFFAKGGSGMNVTVPFKEQAFALCDVLTERAQIAKAVNTLWMENGKLHGDNTDGQGLVAAIQALEWNLENTTILILGAGGATRGVIYPLVQAGAKKIVIANRTLARAEQLVDDLKTAVPQAQLQAISLNDLEGDFDIVINATSASLSGDALQLPEKLKFKYAYEMAYGKPSSFLDQAKQRNVPYAEGFGMLVGQAIEAFSIWNNVRPQLKDFL.

Residues 15-17 (SRS) and threonine 62 contribute to the shikimate site. Catalysis depends on lysine 66, which acts as the Proton acceptor. Residue glutamate 78 coordinates NADP(+). Shikimate contacts are provided by asparagine 87 and aspartate 102. NADP(+)-binding positions include 126-130 (GAGGA), 150-155 (NRTLAR), and methionine 214. Tyrosine 216 contributes to the shikimate binding site. NADP(+) is bound at residue glycine 236.

The protein belongs to the shikimate dehydrogenase family. As to quaternary structure, homodimer.

The enzyme catalyses shikimate + NADP(+) = 3-dehydroshikimate + NADPH + H(+). It functions in the pathway metabolic intermediate biosynthesis; chorismate biosynthesis; chorismate from D-erythrose 4-phosphate and phosphoenolpyruvate: step 4/7. Its function is as follows. Involved in the biosynthesis of the chorismate, which leads to the biosynthesis of aromatic amino acids. Catalyzes the reversible NADPH linked reduction of 3-dehydroshikimate (DHSA) to yield shikimate (SA). In Acinetobacter baumannii (strain ACICU), this protein is Shikimate dehydrogenase (NADP(+)).